The following is a 424-amino-acid chain: Histidine--tRNA ligase (424 aa).

This sequence belongs to the class-II aminoacyl-tRNA synthetase family. In terms of assembly, homodimer.

It localises to the cytoplasm. The enzyme catalyses tRNA(His) + L-histidine + ATP = L-histidyl-tRNA(His) + AMP + diphosphate + H(+). This chain is Histidine--tRNA ligase, found in Thioalkalivibrio sulfidiphilus (strain HL-EbGR7).